The sequence spans 241 residues: Ubiquinone biosynthesis O-methyltransferase (241 aa).

S-adenosyl-L-methionine is bound by residues R46, G66, D87, and M131.

The protein belongs to the methyltransferase superfamily. UbiG/COQ3 family.

It catalyses the reaction a 3-demethylubiquinol + S-adenosyl-L-methionine = a ubiquinol + S-adenosyl-L-homocysteine + H(+). The enzyme catalyses a 3-(all-trans-polyprenyl)benzene-1,2-diol + S-adenosyl-L-methionine = a 2-methoxy-6-(all-trans-polyprenyl)phenol + S-adenosyl-L-homocysteine + H(+). It functions in the pathway cofactor biosynthesis; ubiquinone biosynthesis. In terms of biological role, O-methyltransferase that catalyzes the 2 O-methylation steps in the ubiquinone biosynthetic pathway. The polypeptide is Ubiquinone biosynthesis O-methyltransferase (Bordetella avium (strain 197N)).